The sequence spans 191 residues: UPF0312 protein Shew185_3055 (191 aa).

An N-terminal signal peptide occupies residues 1–22 (MKKQLLSALIGASLLAPMAASA).

This sequence belongs to the UPF0312 family. Type 1 subfamily.

The protein resides in the periplasm. The chain is UPF0312 protein Shew185_3055 from Shewanella baltica (strain OS185).